A 353-amino-acid chain; its full sequence is Sesquiterpene synthase Agr8 (353 aa).

Mg(2+) is bound by residues D82, N220, S224, and E228. The DDXXD motif signature appears at 82–86 (DEYTD). Residues R309 and Y310 each coordinate (2E,6E)-farnesyl diphosphate.

Belongs to the terpene synthase family. Requires Mg(2+) as cofactor.

It catalyses the reaction (2E,6E)-farnesyl diphosphate = gamma-muurolene + diphosphate. It carries out the reaction (2E,6E)-farnesyl diphosphate = alpha-selinene + diphosphate. The catalysed reaction is (2E,6E)-farnesyl diphosphate = delta-cadinene + diphosphate. Functionally, terpene cyclase that catalyzes the cyclization of farnesyl diphosphate (FPP) to various sesquiterpenes, including beta-elemene, gamma-muurolene, alpha-selinene, beta-selinene, beta-cadinene, delta-cadinene and alpha-cadinol. The chain is Sesquiterpene synthase Agr8 from Cyclocybe aegerita (Black poplar mushroom).